Reading from the N-terminus, the 148-residue chain is 3-hydroxyacyl-[acyl-carrier-protein] dehydratase FabZ (148 aa).

His-47 is a catalytic residue.

The protein belongs to the thioester dehydratase family. FabZ subfamily.

Its subcellular location is the cytoplasm. It carries out the reaction a (3R)-hydroxyacyl-[ACP] = a (2E)-enoyl-[ACP] + H2O. In terms of biological role, involved in unsaturated fatty acids biosynthesis. Catalyzes the dehydration of short chain beta-hydroxyacyl-ACPs and long chain saturated and unsaturated beta-hydroxyacyl-ACPs. This is 3-hydroxyacyl-[acyl-carrier-protein] dehydratase FabZ from Hydrogenobaculum sp. (strain Y04AAS1).